The sequence spans 314 residues: Lysophospholipase D GDPD1 (314 aa).

Over 1–3 (MSS) the chain is Extracellular. A helical membrane pass occupies residues 4–24 (TAAFYLLSTLGGYLVTSFLLL). Topologically, residues 25–195 (KYPTLLHQRK…VEKCYKENSD (171 aa)) are cytoplasmic. One can recognise a GP-PDE domain in the interval 40 to 309 (SKHISHRGGA…DYPTKLRDFL (270 aa)). Glu-72, Asp-74, and His-87 together coordinate a divalent metal cation. The chain crosses the membrane as a helical span at residues 196-216 (IPILFSLQRVLLILGLFFTGL). The Extracellular segment spans residues 217–314 (LPFVPIREQF…LRDFLHNFSA (98 aa)).

This sequence belongs to the glycerophosphoryl diester phosphodiesterase family. As to expression, widely expressed with high expression level in testis.

The protein resides in the cytoplasm. The protein localises to the membrane. It localises to the perinuclear region. It is found in the endoplasmic reticulum. The catalysed reaction is a 1-O-alkyl-sn-glycero-3-phosphocholine + H2O = a 1-O-alkyl-sn-glycero-3-phosphate + choline + H(+). The enzyme catalyses 1-hexadecanoyl-sn-glycero-3-phosphocholine + H2O = 1-hexadecanoyl-sn-glycero-3-phosphate + choline + H(+). It catalyses the reaction N-hexadecanoyl-sn-glycero-3-phosphoethanolamine + H2O = N-hexadecanoylethanolamine + sn-glycerol 3-phosphate + H(+). It carries out the reaction N-(5Z,8Z,11Z,14Z-eicosatetraenoyl)-1-(9Z-octadecenoyl)-sn-glycero-3-phosphoethanolamine + H2O = N-(5Z,8Z,11Z,14Z-eicosatetraenoyl)-ethanolamine + 1-(9Z-octadecenoyl)-sn-glycero-3-phosphate + H(+). The catalysed reaction is N,1-di-(9Z-octadecenoyl)-sn-glycero-3-phosphoethanolamine + H2O = N-(9Z-octadecenoyl) ethanolamine + 1-(9Z-octadecenoyl)-sn-glycero-3-phosphate + H(+). The enzyme catalyses N-hexadecanoyl-1-(9Z-octadecenoyl)-sn-glycero-3-phosphoethanolamine + H2O = N-hexadecanoylethanolamine + 1-(9Z-octadecenoyl)-sn-glycero-3-phosphate + H(+). It catalyses the reaction 1-O-(1Z-octadecenyl)-sn-glycero-3-phospho-N-hexadecanoyl-ethanolamine + H2O = 1-O-(1Z-octadecenyl)-sn-glycero-3-phosphate + N-hexadecanoylethanolamine + H(+). It carries out the reaction 1-hexadecanoyl-sn-glycero-3-phosphoethanolamine + H2O = 1-hexadecanoyl-sn-glycero-3-phosphate + ethanolamine + H(+). The catalysed reaction is 1-O-hexadecyl-sn-glycero-3-phosphocholine + H2O = 1-O-hexadecyl-sn-glycero-3-phosphate + choline + H(+). The enzyme catalyses 1-(9Z-octadecenoyl)-sn-glycero-3-phosphocholine + H2O = 1-(9Z-octadecenoyl)-sn-glycero-3-phosphate + choline + H(+). It catalyses the reaction N,1-dihexadecanoyl-sn-glycero-3-phosphoethanolamine + H2O = N-hexadecanoylethanolamine + 1-hexadecanoyl-sn-glycero-3-phosphate + H(+). It carries out the reaction 1-O-(1Z-octadecenyl)-sn-glycero-3-phospho-(N-5Z,8Z,11Z,14Z-eicosatetraenoyl)-ethanolamine + H2O = 1-O-(1Z-octadecenyl)-sn-glycero-3-phosphate + N-(5Z,8Z,11Z,14Z-eicosatetraenoyl)-ethanolamine + H(+). The catalysed reaction is 1-O-(1Z-octadecenyl)-sn-glycero-3-phospho-(N-9Z-octadecenoyl)-ethanolamine + H2O = 1-O-(1Z-octadecenyl)-sn-glycero-3-phosphate + N-(9Z-octadecenoyl) ethanolamine + H(+). With respect to regulation, lysophospholipase D activity is increased by magnesium and manganese and inhibited by calcium in a concentration dependent manner. Loss of lysophospholipase D activity by addition of EDTA. Functionally, hydrolyzes lysoglycerophospholipids to produce lysophosphatidic acid (LPA) and the corresponding amines. Shows a preference for 1-O-alkyl-sn-glycero-3-phosphocholine (lyso-PAF), lysophosphatidylethanolamine (lyso-PE) and lysophosphatidylcholine (lyso-PC). May be involved in bioactive N-acylethanolamine biosynthesis from both N-acyl-lysoplasmenylethanolamin (N-acyl-lysoPlsEt) and N-acyl-lysophosphatidylethanolamin (N-acyl-lysoPE). In addition, hydrolyzes glycerophospho-N-acylethanolamine to N-acylethanolamine. Does not display glycerophosphodiester phosphodiesterase activity, since it cannot hydrolyze either glycerophosphoinositol or glycerophosphocholine. The polypeptide is Lysophospholipase D GDPD1 (Homo sapiens (Human)).